The primary structure comprises 171 residues: MPLLDSFTVDHTIMKAPAVRVAKTMKTPHGDEITVFDLRFCVPNKEVMPEKGIHTLEHLFAGFMRDHLNGDGVEIIDISPMGCRTGFYMSLIGTPDEQRVADAWKAAMADVLKVTDQRKIPELNEYQCGTYHMHSLEEAQSIAKDILDRDVRINHNEELALPKEKLTELHI.

3 residues coordinate Fe cation: H54, H58, and C128.

This sequence belongs to the LuxS family. In terms of assembly, homodimer. Requires Fe cation as cofactor.

The catalysed reaction is S-(5-deoxy-D-ribos-5-yl)-L-homocysteine = (S)-4,5-dihydroxypentane-2,3-dione + L-homocysteine. In terms of biological role, involved in the synthesis of autoinducer 2 (AI-2) which is secreted by bacteria and is used to communicate both the cell density and the metabolic potential of the environment. The regulation of gene expression in response to changes in cell density is called quorum sensing. Catalyzes the transformation of S-ribosylhomocysteine (RHC) to homocysteine (HC) and 4,5-dihydroxy-2,3-pentadione (DPD). This is S-ribosylhomocysteine lyase from Yersinia pseudotuberculosis serotype O:1b (strain IP 31758).